The following is a 449-amino-acid chain: Na(+)-translocating NADH-quinone reductase subunit A (449 aa).

Belongs to the NqrA family. In terms of assembly, composed of six subunits; NqrA, NqrB, NqrC, NqrD, NqrE and NqrF.

It carries out the reaction a ubiquinone + n Na(+)(in) + NADH + H(+) = a ubiquinol + n Na(+)(out) + NAD(+). NQR complex catalyzes the reduction of ubiquinone-1 to ubiquinol by two successive reactions, coupled with the transport of Na(+) ions from the cytoplasm to the periplasm. NqrA to NqrE are probably involved in the second step, the conversion of ubisemiquinone to ubiquinol. The sequence is that of Na(+)-translocating NADH-quinone reductase subunit A from Actinobacillus pleuropneumoniae serotype 3 (strain JL03).